We begin with the raw amino-acid sequence, 214 residues long: uncharacterized protein (214 aa).

Residues 39–68 (KLRSKKEVEEKIKEVDRELEEVVNAGVSIN) adopt a coiled-coil conformation. Residues 99–114 (EIKVEAPEPDEEKLPD) show a composition bias toward basic and acidic residues. Residues 99–162 (EIKVEAPEPD…EEVEFDEEDD (64 aa)) form a disordered region. Acidic residues predominate over residues 123–162 (SDLDMDFEDLGQEIPLDADEQEEEEEEEEVEEVEFDEEDD). Positions 138-212 (LDADEQEEEE…IQRLKVLSGG (75 aa)) form a coiled coil.

This is an uncharacterized protein from Archaeoglobus fulgidus (strain ATCC 49558 / DSM 4304 / JCM 9628 / NBRC 100126 / VC-16).